Here is a 323-residue protein sequence, read N- to C-terminus: Lipoyl synthase (323 aa).

A disordered region spans residues 1-27 (MVTILDRTSSDEKRIRHPEKAHRPDTE). Residues Cys-61, Cys-66, Cys-72, Cys-87, Cys-91, Cys-94, and Ser-300 each coordinate [4Fe-4S] cluster. Residues 73–289 (WEKKHATFMI…ETVAYAKGFL (217 aa)) enclose the Radical SAM core domain.

It belongs to the radical SAM superfamily. Lipoyl synthase family. The cofactor is [4Fe-4S] cluster.

It is found in the cytoplasm. It catalyses the reaction [[Fe-S] cluster scaffold protein carrying a second [4Fe-4S](2+) cluster] + N(6)-octanoyl-L-lysyl-[protein] + 2 oxidized [2Fe-2S]-[ferredoxin] + 2 S-adenosyl-L-methionine + 4 H(+) = [[Fe-S] cluster scaffold protein] + N(6)-[(R)-dihydrolipoyl]-L-lysyl-[protein] + 4 Fe(3+) + 2 hydrogen sulfide + 2 5'-deoxyadenosine + 2 L-methionine + 2 reduced [2Fe-2S]-[ferredoxin]. It participates in protein modification; protein lipoylation via endogenous pathway; protein N(6)-(lipoyl)lysine from octanoyl-[acyl-carrier-protein]: step 2/2. Its function is as follows. Catalyzes the radical-mediated insertion of two sulfur atoms into the C-6 and C-8 positions of the octanoyl moiety bound to the lipoyl domains of lipoate-dependent enzymes, thereby converting the octanoylated domains into lipoylated derivatives. The chain is Lipoyl synthase from Agrobacterium fabrum (strain C58 / ATCC 33970) (Agrobacterium tumefaciens (strain C58)).